The primary structure comprises 258 residues: Protein SseB (258 aa).

May be involved in the enhancement of serine-sensitivity. The sequence is that of Protein SseB (sseB) from Escherichia coli (strain K12).